Consider the following 267-residue polypeptide: Type II pantothenate kinase (267 aa).

Residue 6-13 (DAGGTLIK) participates in ATP binding. Glu70 (proton acceptor) is an active-site residue. ATP is bound by residues Thr99, 121 to 125 (GGMIQ), Tyr137, and Ser225.

Belongs to the type II pantothenate kinase family. As to quaternary structure, homodimer.

The protein resides in the cytoplasm. The catalysed reaction is (R)-pantothenate + ATP = (R)-4'-phosphopantothenate + ADP + H(+). It functions in the pathway cofactor biosynthesis; coenzyme A biosynthesis; CoA from (R)-pantothenate: step 1/5. Functionally, catalyzes the phosphorylation of pantothenate (Pan), the first step in CoA biosynthesis. The polypeptide is Type II pantothenate kinase (Staphylococcus aureus (strain USA300)).